The sequence spans 211 residues: Ribosomal RNA large subunit methyltransferase E (211 aa).

Gly-60, Trp-62, Asp-85, Asp-101, and Asp-126 together coordinate S-adenosyl-L-methionine. The active-site Proton acceptor is Lys-166.

The protein belongs to the class I-like SAM-binding methyltransferase superfamily. RNA methyltransferase RlmE family.

It is found in the cytoplasm. The catalysed reaction is uridine(2552) in 23S rRNA + S-adenosyl-L-methionine = 2'-O-methyluridine(2552) in 23S rRNA + S-adenosyl-L-homocysteine + H(+). Functionally, specifically methylates the uridine in position 2552 of 23S rRNA at the 2'-O position of the ribose in the fully assembled 50S ribosomal subunit. This chain is Ribosomal RNA large subunit methyltransferase E, found in Bordetella petrii (strain ATCC BAA-461 / DSM 12804 / CCUG 43448).